A 298-amino-acid polypeptide reads, in one-letter code: Acetylglutamate kinase (298 aa).

Substrate contacts are provided by residues 61–62, Arg-83, and Asn-188; that span reads GG.

It belongs to the acetylglutamate kinase family. ArgB subfamily.

The protein localises to the cytoplasm. The enzyme catalyses N-acetyl-L-glutamate + ATP = N-acetyl-L-glutamyl 5-phosphate + ADP. It participates in amino-acid biosynthesis; L-arginine biosynthesis; N(2)-acetyl-L-ornithine from L-glutamate: step 2/4. In terms of biological role, catalyzes the ATP-dependent phosphorylation of N-acetyl-L-glutamate. The sequence is that of Acetylglutamate kinase from Syntrophobacter fumaroxidans (strain DSM 10017 / MPOB).